The primary structure comprises 1017 residues: DNA polymerase (1017 aa).

It belongs to the DNA polymerase type-B family. In terms of assembly, heterodimer with the terminal protein; this heterodimer binds to bp 9 to 18 of the genome. Forms a complex with viral pTP, DBP and hosts NFIA and POU2F1/OCT1 for initiation of replication.

It localises to the host nucleus. The enzyme catalyses DNA(n) + a 2'-deoxyribonucleoside 5'-triphosphate = DNA(n+1) + diphosphate. Its function is as follows. Eukaryotic-type DNA polymerase involved in viral genomic replication. DNA synthesis is protein primed, and acts in a strand displacement replication. Assembles in complex with viral pTP, DBP, host NFIA and host POU2F1/OCT1 on viral origin of replication. The polymerase covalently transfers dCMP onto pTP, thereby initiating complementary strand synthesis. This chain is DNA polymerase, found in Bovine adenovirus 2 (BAdV-2).